Here is a 355-residue protein sequence, read N- to C-terminus: Peptide chain release factor 1 (355 aa).

Q230 is subject to N5-methylglutamine.

The protein belongs to the prokaryotic/mitochondrial release factor family. In terms of processing, methylated by PrmC. Methylation increases the termination efficiency of RF1.

The protein localises to the cytoplasm. Peptide chain release factor 1 directs the termination of translation in response to the peptide chain termination codons UAG and UAA. This Geobacter metallireducens (strain ATCC 53774 / DSM 7210 / GS-15) protein is Peptide chain release factor 1.